A 140-amino-acid polypeptide reads, in one-letter code: Fluoride-specific ion channel FluC 1 (140 aa).

A run of 4 helical transmembrane segments spans residues 4–24 (LYLA…ASFI), 32–52 (FPLA…FILT), 70–90 (TGML…LHLL), and 99–119 (LLYL…GIFL). Na(+)-binding residues include Gly-74 and Thr-77.

It belongs to the fluoride channel Fluc/FEX (TC 1.A.43) family.

Its subcellular location is the cell membrane. The catalysed reaction is fluoride(in) = fluoride(out). Its activity is regulated as follows. Na(+) is not transported, but it plays an essential structural role and its presence is essential for fluoride channel function. Fluoride-specific ion channel. Important for reducing fluoride concentration in the cell, thus reducing its toxicity. In Moorella thermoacetica (strain ATCC 39073 / JCM 9320), this protein is Fluoride-specific ion channel FluC 1.